Reading from the N-terminus, the 160-residue chain is MKIYTQRLEDISPDQAFETVELTFDTRQKSRFRAALASGVDIGADLPRTGILRSGSYIATQEGDVLRVDAKPERLMKVTAQTEFDLLKAAYHLGNRHVPLMLTPTALYFEPDHVLAEMVEGLGLTVTETDHPFEPESGAYAQHSHDHRLSPIKVLHHVHS.

It belongs to the UreE family.

Its subcellular location is the cytoplasm. Involved in urease metallocenter assembly. Binds nickel. Probably functions as a nickel donor during metallocenter assembly. The protein is Urease accessory protein UreE of Acinetobacter baumannii (strain ACICU).